A 155-amino-acid chain; its full sequence is Small ribosomal subunit protein uS7 (155 aa).

Belongs to the universal ribosomal protein uS7 family. As to quaternary structure, part of the 30S ribosomal subunit. Contacts proteins S9 and S11.

One of the primary rRNA binding proteins, it binds directly to 16S rRNA where it nucleates assembly of the head domain of the 30S subunit. Is located at the subunit interface close to the decoding center, probably blocks exit of the E-site tRNA. In Chlorobium phaeovibrioides (strain DSM 265 / 1930) (Prosthecochloris vibrioformis (strain DSM 265)), this protein is Small ribosomal subunit protein uS7.